Here is a 192-residue protein sequence, read N- to C-terminus: Ion-translocating oxidoreductase complex subunit A (192 aa).

6 helical membrane-spanning segments follow: residues 5 to 25 (LLLL…FLGL), 39 to 59 (IGMS…SYLV), 65 to 85 (LPFD…AVVV), 102 to 122 (ALGI…VALL), 134 to 154 (AIYG…FSAM), and 171 to 191 (AIAM…TGLV).

The protein belongs to the NqrDE/RnfAE family. As to quaternary structure, the complex is composed of six subunits: RnfA, RnfB, RnfC, RnfD, RnfE and RnfG.

It localises to the cell inner membrane. Its function is as follows. Part of a membrane-bound complex that couples electron transfer with translocation of ions across the membrane. This is Ion-translocating oxidoreductase complex subunit A from Shewanella sp. (strain MR-4).